Here is a 545-residue protein sequence, read N- to C-terminus: Threonine--tRNA ligase catalytic subunit (545 aa).

The interval Asp-139–Pro-433 is catalytic. Zn(2+) is bound by residues Cys-231, His-282, and His-410.

The protein belongs to the class-II aminoacyl-tRNA synthetase family. Homodimer. Probably interacts with its editing subunit. Zn(2+) is required as a cofactor.

The protein resides in the cytoplasm. The enzyme catalyses tRNA(Thr) + L-threonine + ATP = L-threonyl-tRNA(Thr) + AMP + diphosphate + H(+). Catalyzes the attachment of threonine to tRNA(Thr) in a two-step reaction: L-threonine is first activated by ATP to form Thr-AMP and then transferred to the acceptor end of tRNA(Thr). Also activates L-serine and transfers it to tRNA(Thr) but cannot deacylate incorrectly charged amino acid; unlike most archaea the editing function is found in a freestanding protein. The sequence is that of Threonine--tRNA ligase catalytic subunit from Saccharolobus islandicus (strain Y.G.57.14 / Yellowstone #1) (Sulfolobus islandicus).